We begin with the raw amino-acid sequence, 318 residues long: Glycine--tRNA ligase alpha subunit (318 aa).

Belongs to the class-II aminoacyl-tRNA synthetase family. As to quaternary structure, tetramer of two alpha and two beta subunits.

The protein resides in the cytoplasm. It carries out the reaction tRNA(Gly) + glycine + ATP = glycyl-tRNA(Gly) + AMP + diphosphate. The sequence is that of Glycine--tRNA ligase alpha subunit from Methylibium petroleiphilum (strain ATCC BAA-1232 / LMG 22953 / PM1).